We begin with the raw amino-acid sequence, 165 residues long: Transcriptional repressor NrdR (165 aa).

Residues 3–34 fold into a zinc finger; the sequence is CPFCRHPDSRVVDSREADEGQAIRRRRSCPEC. The region spanning 46–136 is the ATP-cone domain; it reads LSVVKRSGVT…VYKSFSSAAD (91 aa).

This sequence belongs to the NrdR family. Requires Zn(2+) as cofactor.

Negatively regulates transcription of bacterial ribonucleotide reductase nrd genes and operons by binding to NrdR-boxes. The sequence is that of Transcriptional repressor NrdR from Rhodococcus erythropolis (strain PR4 / NBRC 100887).